The chain runs to 528 residues: Drimenol cyclase drtB (528 aa).

It belongs to the HAD-like hydrolase superfamily.

The catalysed reaction is (2E,6E)-farnesyl diphosphate + H2O = (5S,9S,10S)-drim-7-en-11-ol + diphosphate. The protein operates within secondary metabolite biosynthesis; terpenoid biosynthesis. Drimenol cyclase; part of the gene cluster that mediates the biosynthesis of various drimane-type sesquiterpene esters, compounds that exhibit diverse biological activities and are widely present in eukaryotes. The pathway begins with the synthesis of the backbone drimenol by the terpene cyclase drtB using farnesyl pyrophosphate (FPP) as substrate. The cytochrome P450 monooxygenase drtD is then responsible for the hydroxylations at C-6, C-9 and C-12, as well as the oxidation of hydroxyl groups at C-6 and C-11 to a ketone and an aldehyde, respectively. Then, the biosynthesis can go in two directions, either the hydroxylated drimenol is further hydroxylated at C-2 and C-3 by an enzyme(s) not associated with the drt cluster, or the FAD-binding oxidoreductase drtC further oxidizes C-11 or C-12 to form the butyrolactone ring. DrtB, drtD and drtC are solely responsible for the formation of the different drimane structures observed during drimane sesquiterpenes biosynthesis. The polyketide synthase drtA synthesizes different lengths (C6 and C8) of PKS chains, which are then oxidized to varying degrees by the short-chain dehydrogenase drtF. Finally, these PKS chains are transferred onto drimane sesquiterpenes by the acyltransferase drtE, forming the sesquiterpene esters. In addition to the different fatty acyl-CoA chains produced by drtA, drtE is also able to use cinnamoyl-CoA as a substrate. The protein is Drimenol cyclase drtB of Aspergillus calidoustus.